The following is a 388-amino-acid chain: Paired box protein Pax-5 (388 aa).

A DNA-binding region (paired) is located at residues 15-141 (RHGGVNQLGG…SSINRIIRTK (127 aa)). Positions 18 to 74 (GVNQLGGVFVNGRPLPDVVRQRIVELAHQGVRPCDISRQLRVSHGCVSKILGRYYET) are PAI subdomain. Residues 93-141 (KVVDKIADYKRQNPTMFAWEIRDRLLAERVCDNDTVPSVSSINRIIRTK) form an RED subdomain region. Over residues 143-158 (QQPTNQQIPPSNHSIA) the composition is skewed to polar residues. Disordered stretches follow at residues 143 to 162 (QQPTNQQIPPSNHSIASTGS) and 191 to 217 (AETNKRKRDEGIQESPIPNGHSLPGRD).

In terms of tissue distribution, first detected in mid-neurula embryos in the folding neural tube. With the completion of neurulation, expression becomes localized to the midbrain/hindbrain boundary (MHB) till at least stage 40. Expression is absent from regions adjacent to the MHB. In tailbuds, weakly and transiently expressed in the developing otic vesicle from stage 21 to stage 27.

Its subcellular location is the nucleus. Functionally, probable transcription factor. The polypeptide is Paired box protein Pax-5 (Xenopus laevis (African clawed frog)).